Reading from the N-terminus, the 84-residue chain is Large ribosomal subunit protein eL34 (84 aa).

Belongs to the eukaryotic ribosomal protein eL34 family.

The protein is Large ribosomal subunit protein eL34 of Pyrobaculum calidifontis (strain DSM 21063 / JCM 11548 / VA1).